Here is a 419-residue protein sequence, read N- to C-terminus: Divergent protein kinase domain 1C (419 aa).

Residues 1 to 22 (MARAAGARGPAGWCRRRGRCGR) lie on the Cytoplasmic side of the membrane. The May mediate ER retention motif lies at 16–17 (RR). Residues 23 to 43 (GTLLAFAAWTAGWVLAAALLL) form a helical membrane-spanning segment. Topologically, residues 44 to 419 (RAHPGVLSER…TLRELQEAEK (376 aa)) are lumenal.

The protein belongs to the DIPK family. In terms of processing, among the many cysteines in the lumenal domain, most are probably involved in disulfide bonds.

Its subcellular location is the endoplasmic reticulum membrane. This is Divergent protein kinase domain 1C from Homo sapiens (Human).